The following is a 172-amino-acid chain: Protein nemuri (172 aa).

A signal peptide spans 1 to 25; the sequence is MSAKYTLIFALAALCCLVFSTEAAA. The tract at residues 27 to 172 is disordered; sequence RSRVLSSRRG…KRRSGKGNKA (146 aa). Basic and acidic residues-rich tracts occupy residues 35 to 50, 58 to 90, and 97 to 108; these read RGSE…KEDS, DLER…DKET, and TIVKPNKDDARA. Positions 45–74 form a coiled coil; sequence DNKEDSELAAQEQDLERQEQEEQNDRLEGR. Residues 109–172 are compositionally biased toward basic residues; sequence RRIVRAGRRR…KRRSGKGNKA (64 aa).

In terms of tissue distribution, detected in the brain where it accumulates in the dorsal fan-shaped body following sleep deprivation (at protein level). Expressed in the adult body.

The protein resides in the secreted. Its function is as follows. Antimicrobial protein which is essential for the homeostatic regulation of sleep. Promotes sleep following sleep deprivation or bacterial infection and increases survival following bacterial infection. Likely to promote survival to bacterial infection in two ways; by contributing to the innate immune response and by promoting sleep during sickness to aid recovery. The chain is Protein nemuri from Drosophila melanogaster (Fruit fly).